Reading from the N-terminus, the 112-residue chain is Protein NIM1-INTERACTING 3 (112 aa).

Disordered regions lie at residues 1 to 20 (MDRDRKRVKMEKEDDEEEKM) and 77 to 112 (EKAANESSSASNEYDGSKEKQEGSETNVCLDLNLSL). Coiled coils occupy residues 1 to 35 (MDRDRKRVKMEKEDDEEEKMEKLYTVLKNAREMRK) and 69 to 96 (NKAEANNIEKAANESSSASNEYDGSKEK). The span at 77–89 (EKAANESSSASNE) shows a compositional bias: low complexity.

It belongs to the NPR1-interactor family. As to quaternary structure, interacts with NPR1 C-terminal region.

The protein resides in the nucleus. The polypeptide is Protein NIM1-INTERACTING 3 (Arabidopsis thaliana (Mouse-ear cress)).